Reading from the N-terminus, the 262-residue chain is Large ribosomal subunit protein uL5c (262 aa).

The N-terminal 39 residues, 1-39 (MASPSLLQSSASSFHGRFSPLAAPSSARMLSPPLRNVVK), are a transit peptide targeting the chloroplast.

The protein belongs to the universal ribosomal protein uL5 family. As to quaternary structure, part of the 50S ribosomal subunit; contacts the 5S rRNA.

The protein resides in the plastid. It is found in the chloroplast. Functionally, binds 5S rRNA, forms part of the central protuberance of the 50S subunit. In Arabidopsis thaliana (Mouse-ear cress), this protein is Large ribosomal subunit protein uL5c (RPL5).